A 174-amino-acid chain; its full sequence is Peptide deformylase (174 aa).

The Fe cation site is built by C96 and H138. E139 is an active-site residue. H142 contacts Fe cation.

This sequence belongs to the polypeptide deformylase family. The cofactor is Fe(2+).

The enzyme catalyses N-terminal N-formyl-L-methionyl-[peptide] + H2O = N-terminal L-methionyl-[peptide] + formate. In terms of biological role, removes the formyl group from the N-terminal Met of newly synthesized proteins. Requires at least a dipeptide for an efficient rate of reaction. N-terminal L-methionine is a prerequisite for activity but the enzyme has broad specificity at other positions. This is Peptide deformylase from Helicobacter pylori (strain G27).